The chain runs to 206 residues: Small ribosomal subunit protein uS4 (206 aa).

Residues 98–155 (TRLDNVVYRLGWALSRAQARQIVSHGKIAVNGKRVNIPSYNLKPGDVVELLDKDLIPV) form the S4 RNA-binding domain.

This sequence belongs to the universal ribosomal protein uS4 family. As to quaternary structure, part of the 30S ribosomal subunit. Contacts protein S5. The interaction surface between S4 and S5 is involved in control of translational fidelity.

Functionally, one of the primary rRNA binding proteins, it binds directly to 16S rRNA where it nucleates assembly of the body of the 30S subunit. Its function is as follows. With S5 and S12 plays an important role in translational accuracy. In Dictyoglomus turgidum (strain DSM 6724 / Z-1310), this protein is Small ribosomal subunit protein uS4.